The primary structure comprises 685 residues: Probable transketolase (685 aa).

His32 is a substrate binding site. Thiamine diphosphate-binding positions include His72 and 121–123; that span reads GPL. A Mg(2+)-binding site is contributed by Asp162. Thiamine diphosphate-binding residues include Gly163 and Asn192. Positions 192 and 194 each coordinate Mg(2+). His268, Arg363, and Ser390 together coordinate substrate. His268 provides a ligand contact to thiamine diphosphate. Positions 422 and 448 each coordinate thiamine diphosphate. The active-site Proton donor is Glu422. His472, Asp480, and Arg531 together coordinate substrate.

It belongs to the transketolase family. As to quaternary structure, homodimer. Mg(2+) serves as cofactor. It depends on Ca(2+) as a cofactor. Requires Mn(2+) as cofactor. The cofactor is Co(2+). Thiamine diphosphate is required as a cofactor.

The enzyme catalyses D-sedoheptulose 7-phosphate + D-glyceraldehyde 3-phosphate = aldehydo-D-ribose 5-phosphate + D-xylulose 5-phosphate. Its function is as follows. Catalyzes the transfer of a two-carbon ketol group from a ketose donor to an aldose acceptor, via a covalent intermediate with the cofactor thiamine pyrophosphate. This Schizosaccharomyces pombe (strain 972 / ATCC 24843) (Fission yeast) protein is Probable transketolase.